A 205-amino-acid polypeptide reads, in one-letter code: Holliday junction branch migration complex subunit RuvA (205 aa).

Positions 1–64 (MIGRLRGIIL…EDAQLLFGFN (64 aa)) are domain I. A domain II region spans residues 65 to 142 (DKQERALFRE…KGLSGDLFNP (78 aa)). Residues 143–156 (VSDIPLASPASAES) are flexible linker. The segment at 157–205 (RASDPEAEAAAALVALGYKPQEASRMISKIARPEADCETLIRDALRAAL) is domain III.

The protein belongs to the RuvA family. Homotetramer. Forms an RuvA(8)-RuvB(12)-Holliday junction (HJ) complex. HJ DNA is sandwiched between 2 RuvA tetramers; dsDNA enters through RuvA and exits via RuvB. An RuvB hexamer assembles on each DNA strand where it exits the tetramer. Each RuvB hexamer is contacted by two RuvA subunits (via domain III) on 2 adjacent RuvB subunits; this complex drives branch migration. In the full resolvosome a probable DNA-RuvA(4)-RuvB(12)-RuvC(2) complex forms which resolves the HJ.

It localises to the cytoplasm. In terms of biological role, the RuvA-RuvB-RuvC complex processes Holliday junction (HJ) DNA during genetic recombination and DNA repair, while the RuvA-RuvB complex plays an important role in the rescue of blocked DNA replication forks via replication fork reversal (RFR). RuvA specifically binds to HJ cruciform DNA, conferring on it an open structure. The RuvB hexamer acts as an ATP-dependent pump, pulling dsDNA into and through the RuvAB complex. HJ branch migration allows RuvC to scan DNA until it finds its consensus sequence, where it cleaves and resolves the cruciform DNA. The protein is Holliday junction branch migration complex subunit RuvA of Pectobacterium carotovorum subsp. carotovorum (strain PC1).